The chain runs to 192 residues: Ion-translocating oxidoreductase complex subunit A (192 aa).

Transmembrane regions (helical) follow at residues 5 to 25 (LLLL…FLGL), 38 to 58 (AIGM…LSFL), 72 to 92 (LRTM…EMLV), 102 to 122 (ALGI…VALL), 134 to 154 (AIYG…FSAM), and 171 to 191 (AIAM…AGLI).

It belongs to the NqrDE/RnfAE family. As to quaternary structure, the complex is composed of six subunits: RnfA, RnfB, RnfC, RnfD, RnfE and RnfG.

It is found in the cell inner membrane. Functionally, part of a membrane-bound complex that couples electron transfer with translocation of ions across the membrane. The polypeptide is Ion-translocating oxidoreductase complex subunit A (Shewanella denitrificans (strain OS217 / ATCC BAA-1090 / DSM 15013)).